Here is a 67-residue protein sequence, read N- to C-terminus: Sec-independent protein translocase protein TatA (67 aa).

A helical membrane pass occupies residues 1 to 21; the sequence is MFGIGIQELLVVLVLVLLVFG. The interval 46–67 is disordered; the sequence is PDEIDITPGKKNGKTDKDDKQA. Positions 58-67 are enriched in basic and acidic residues; it reads GKTDKDDKQA.

Belongs to the TatA/E family. In terms of assembly, the Tat system comprises two distinct complexes: a TatABC complex, containing multiple copies of TatA, TatB and TatC subunits, and a separate TatA complex, containing only TatA subunits. Substrates initially bind to the TatABC complex, which probably triggers association of the separate TatA complex to form the active translocon.

It is found in the cell inner membrane. Its function is as follows. Part of the twin-arginine translocation (Tat) system that transports large folded proteins containing a characteristic twin-arginine motif in their signal peptide across membranes. TatA could form the protein-conducting channel of the Tat system. The sequence is that of Sec-independent protein translocase protein TatA from Nitratidesulfovibrio vulgaris (strain DSM 19637 / Miyazaki F) (Desulfovibrio vulgaris).